A 160-amino-acid polypeptide reads, in one-letter code: 3-hydroxyacyl-[acyl-carrier-protein] dehydratase FabZ (160 aa).

His-60 is an active-site residue.

Belongs to the thioester dehydratase family. FabZ subfamily.

Its subcellular location is the cytoplasm. It catalyses the reaction a (3R)-hydroxyacyl-[ACP] = a (2E)-enoyl-[ACP] + H2O. Functionally, involved in unsaturated fatty acids biosynthesis. Catalyzes the dehydration of short chain beta-hydroxyacyl-ACPs and long chain saturated and unsaturated beta-hydroxyacyl-ACPs. The sequence is that of 3-hydroxyacyl-[acyl-carrier-protein] dehydratase FabZ from Rhodospirillum rubrum (strain ATCC 11170 / ATH 1.1.1 / DSM 467 / LMG 4362 / NCIMB 8255 / S1).